The chain runs to 136 residues: Peptide methionine sulfoxide reductase MsrB (136 aa).

The region spanning 6–128 (EVSLYKELTD…NSAALSFTDE (123 aa)) is the MsrB domain. Cysteine 45, cysteine 48, cysteine 94, and cysteine 97 together coordinate Zn(2+). Catalysis depends on cysteine 117, which acts as the Nucleophile.

The protein belongs to the MsrB Met sulfoxide reductase family. Zn(2+) serves as cofactor.

It carries out the reaction L-methionyl-[protein] + [thioredoxin]-disulfide + H2O = L-methionyl-(R)-S-oxide-[protein] + [thioredoxin]-dithiol. The chain is Peptide methionine sulfoxide reductase MsrB from Photorhabdus laumondii subsp. laumondii (strain DSM 15139 / CIP 105565 / TT01) (Photorhabdus luminescens subsp. laumondii).